The primary structure comprises 186 residues: Peptidyl-tRNA hydrolase (186 aa).

Residue tyrosine 14 coordinates tRNA. The Proton acceptor role is filled by histidine 19. Positions 65, 67, and 113 each coordinate tRNA.

Belongs to the PTH family. In terms of assembly, monomer.

Its subcellular location is the cytoplasm. The enzyme catalyses an N-acyl-L-alpha-aminoacyl-tRNA + H2O = an N-acyl-L-amino acid + a tRNA + H(+). Hydrolyzes ribosome-free peptidyl-tRNAs (with 1 or more amino acids incorporated), which drop off the ribosome during protein synthesis, or as a result of ribosome stalling. Its function is as follows. Catalyzes the release of premature peptidyl moieties from peptidyl-tRNA molecules trapped in stalled 50S ribosomal subunits, and thus maintains levels of free tRNAs and 50S ribosomes. In Limosilactobacillus fermentum (strain NBRC 3956 / LMG 18251) (Lactobacillus fermentum), this protein is Peptidyl-tRNA hydrolase.